Consider the following 307-residue polypeptide: N-acetylmuramic acid 6-phosphate etherase 2 (307 aa).

The region spanning 62–225 (ITAAFKQGGR…TTASMIRLGK (164 aa)) is the SIS domain. Catalysis depends on E90, which acts as the Proton donor. E121 is an active-site residue.

The protein belongs to the GCKR-like family. MurNAc-6-P etherase subfamily. In terms of assembly, homodimer.

The enzyme catalyses N-acetyl-D-muramate 6-phosphate + H2O = N-acetyl-D-glucosamine 6-phosphate + (R)-lactate. It functions in the pathway amino-sugar metabolism; 1,6-anhydro-N-acetylmuramate degradation. The protein operates within amino-sugar metabolism; N-acetylmuramate degradation. Its pathway is cell wall biogenesis; peptidoglycan recycling. Its function is as follows. Specifically catalyzes the cleavage of the D-lactyl ether substituent of MurNAc 6-phosphate, producing GlcNAc 6-phosphate and D-lactate. Together with AnmK, is also required for the utilization of anhydro-N-acetylmuramic acid (anhMurNAc) either imported from the medium or derived from its own cell wall murein, and thus plays a role in cell wall recycling. The protein is N-acetylmuramic acid 6-phosphate etherase 2 of Vibrio cholerae serotype O1 (strain ATCC 39315 / El Tor Inaba N16961).